Consider the following 179-residue polypeptide: Large ribosomal subunit protein uL5 (179 aa).

It belongs to the universal ribosomal protein uL5 family. As to quaternary structure, part of the 50S ribosomal subunit; part of the 5S rRNA/L5/L18/L25 subcomplex. Contacts the 5S rRNA and the P site tRNA. Forms a bridge to the 30S subunit in the 70S ribosome.

This is one of the proteins that bind and probably mediate the attachment of the 5S RNA into the large ribosomal subunit, where it forms part of the central protuberance. In the 70S ribosome it contacts protein S13 of the 30S subunit (bridge B1b), connecting the 2 subunits; this bridge is implicated in subunit movement. Contacts the P site tRNA; the 5S rRNA and some of its associated proteins might help stabilize positioning of ribosome-bound tRNAs. The polypeptide is Large ribosomal subunit protein uL5 (Ectopseudomonas mendocina (strain ymp) (Pseudomonas mendocina)).